Here is a 300-residue protein sequence, read N- to C-terminus: 4-hydroxy-tetrahydrodipicolinate synthase (300 aa).

Thr45 contacts pyruvate. Tyr140 serves as the catalytic Proton donor/acceptor. Lys169 (schiff-base intermediate with substrate) is an active-site residue. Ile210 contributes to the pyruvate binding site.

It belongs to the DapA family. Homotetramer; dimer of dimers.

The protein localises to the cytoplasm. It carries out the reaction L-aspartate 4-semialdehyde + pyruvate = (2S,4S)-4-hydroxy-2,3,4,5-tetrahydrodipicolinate + H2O + H(+). It participates in amino-acid biosynthesis; L-lysine biosynthesis via DAP pathway; (S)-tetrahydrodipicolinate from L-aspartate: step 3/4. Catalyzes the condensation of (S)-aspartate-beta-semialdehyde [(S)-ASA] and pyruvate to 4-hydroxy-tetrahydrodipicolinate (HTPA). The chain is 4-hydroxy-tetrahydrodipicolinate synthase from Helicobacter pylori (strain P12).